Reading from the N-terminus, the 275-residue chain is Formamidopyrimidine-DNA glycosylase (275 aa).

Pro-2 acts as the Schiff-base intermediate with DNA in catalysis. The active-site Proton donor is the Glu-3. Lys-58 functions as the Proton donor; for beta-elimination activity in the catalytic mechanism. DNA is bound by residues His-93, Arg-111, and Arg-156. The FPG-type zinc-finger motif lies at 241 to 275 (FVYDRAGQPCRVCNTPIRQIVQGQRSTYFCPTCQR). The active-site Proton donor; for delta-elimination activity is the Arg-265.

Belongs to the FPG family. In terms of assembly, monomer. Zn(2+) serves as cofactor.

It carries out the reaction Hydrolysis of DNA containing ring-opened 7-methylguanine residues, releasing 2,6-diamino-4-hydroxy-5-(N-methyl)formamidopyrimidine.. The catalysed reaction is 2'-deoxyribonucleotide-(2'-deoxyribose 5'-phosphate)-2'-deoxyribonucleotide-DNA = a 3'-end 2'-deoxyribonucleotide-(2,3-dehydro-2,3-deoxyribose 5'-phosphate)-DNA + a 5'-end 5'-phospho-2'-deoxyribonucleoside-DNA + H(+). Involved in base excision repair of DNA damaged by oxidation or by mutagenic agents. Acts as a DNA glycosylase that recognizes and removes damaged bases. Has a preference for oxidized purines, such as 7,8-dihydro-8-oxoguanine (8-oxoG). Has AP (apurinic/apyrimidinic) lyase activity and introduces nicks in the DNA strand. Cleaves the DNA backbone by beta-delta elimination to generate a single-strand break at the site of the removed base with both 3'- and 5'-phosphates. In Burkholderia lata (strain ATCC 17760 / DSM 23089 / LMG 22485 / NCIMB 9086 / R18194 / 383), this protein is Formamidopyrimidine-DNA glycosylase.